Reading from the N-terminus, the 300-residue chain is 4-hydroxy-tetrahydrodipicolinate synthase (300 aa).

Thr-56 contributes to the pyruvate binding site. Tyr-145 acts as the Proton donor/acceptor in catalysis. Lys-173 functions as the Schiff-base intermediate with substrate in the catalytic mechanism. Val-215 contacts pyruvate.

Belongs to the DapA family. Homotetramer; dimer of dimers.

It is found in the cytoplasm. It carries out the reaction L-aspartate 4-semialdehyde + pyruvate = (2S,4S)-4-hydroxy-2,3,4,5-tetrahydrodipicolinate + H2O + H(+). It participates in amino-acid biosynthesis; L-lysine biosynthesis via DAP pathway; (S)-tetrahydrodipicolinate from L-aspartate: step 3/4. Its function is as follows. Catalyzes the condensation of (S)-aspartate-beta-semialdehyde [(S)-ASA] and pyruvate to 4-hydroxy-tetrahydrodipicolinate (HTPA). The chain is 4-hydroxy-tetrahydrodipicolinate synthase from Prochlorococcus marinus (strain AS9601).